The chain runs to 215 residues: Adenylate kinase (215 aa).

10 to 15 lines the ATP pocket; that stretch reads GAGKGT. The tract at residues 30–59 is NMP; that stretch reads STGDIFRKNISENTPLGMEARSYMDKGLLV. AMP-binding positions include Thr-31, Arg-36, 57-59, 85-88, and Gln-92; these read LLV and GFPR. An LID region spans residues 126-163; that stretch reads GRRVCTSCGGSFHIKFNPPTIDGKCNLCGSDIVQRKDD. An ATP-binding site is contributed by Arg-127. Zn(2+)-binding residues include Cys-130 and Cys-133. 136 to 137 is an ATP binding site; that stretch reads SF. Residues Cys-150 and Cys-153 each coordinate Zn(2+). Residues Arg-160 and Arg-171 each contribute to the AMP site. An ATP-binding site is contributed by Lys-199.

The protein belongs to the adenylate kinase family. As to quaternary structure, monomer.

Its subcellular location is the cytoplasm. It catalyses the reaction AMP + ATP = 2 ADP. Its pathway is purine metabolism; AMP biosynthesis via salvage pathway; AMP from ADP: step 1/1. Its function is as follows. Catalyzes the reversible transfer of the terminal phosphate group between ATP and AMP. Plays an important role in cellular energy homeostasis and in adenine nucleotide metabolism. This Clostridium botulinum (strain Alaska E43 / Type E3) protein is Adenylate kinase.